The primary structure comprises 156 residues: Guanine deaminase (156 aa).

The 132-residue stretch at 1–132 (MNHETFLKRA…KPAEERTIPF (132 aa)) folds into the CMP/dCMP-type deaminase domain. Residue H53 coordinates Zn(2+). The Proton donor role is filled by E55. Residues C83 and C86 each contribute to the Zn(2+) site.

The protein belongs to the cytidine and deoxycytidylate deaminase family. Requires Zn(2+) as cofactor.

The catalysed reaction is guanine + H2O + H(+) = xanthine + NH4(+). It functions in the pathway purine metabolism; guanine degradation; xanthine from guanine: step 1/1. Functionally, catalyzes the hydrolytic deamination of guanine, producing xanthine and ammonia. In Bacillus subtilis (strain 168), this protein is Guanine deaminase (guaD).